The chain runs to 177 residues: UPF0316 protein STH2077 (177 aa).

The next 2 membrane-spanning stretches (helical) occupy residues 9-29 (AALD…VNTV) and 41-61 (LASA…GLVV).

The protein belongs to the UPF0316 family.

It is found in the cell membrane. In Symbiobacterium thermophilum (strain DSM 24528 / JCM 14929 / IAM 14863 / T), this protein is UPF0316 protein STH2077.